We begin with the raw amino-acid sequence, 200 residues long: LexA repressor (200 aa).

A DNA-binding region (H-T-H motif) is located at residues 28 to 48 (RAEIAEILGFKSANAAEEHLK). Residues Ser-118 and Lys-155 each act as for autocatalytic cleavage activity in the active site.

This sequence belongs to the peptidase S24 family. Homodimer.

It carries out the reaction Hydrolysis of Ala-|-Gly bond in repressor LexA.. Functionally, represses a number of genes involved in the response to DNA damage (SOS response), including recA and lexA. In the presence of single-stranded DNA, RecA interacts with LexA causing an autocatalytic cleavage which disrupts the DNA-binding part of LexA, leading to derepression of the SOS regulon and eventually DNA repair. The chain is LexA repressor from Teredinibacter turnerae (strain ATCC 39867 / T7901).